The chain runs to 160 residues: Succinate dehydrogenase assembly factor 2-A, mitochondrial (160 aa).

Residues 1–30 (MLRQLKLTLNISRWIFMPWQRQASASSSQV) constitute a mitochondrion transit peptide.

This sequence belongs to the SDHAF2 family. In terms of assembly, interacts with the flavoprotein subunit within the SDH catalytic dimer.

The protein localises to the mitochondrion matrix. In terms of biological role, plays an essential role in the assembly of succinate dehydrogenase (SDH), an enzyme complex (also referred to as respiratory complex II) that is a component of both the tricarboxylic acid (TCA) cycle and the mitochondrial electron transport chain, and which couples the oxidation of succinate to fumarate with the reduction of ubiquinone (coenzyme Q) to ubiquinol. Required for flavinylation (covalent attachment of FAD) of the flavoprotein subunit of the SDH catalytic dimer. The chain is Succinate dehydrogenase assembly factor 2-A, mitochondrial from Drosophila persimilis (Fruit fly).